We begin with the raw amino-acid sequence, 231 residues long: Aspartate/glutamate leucyltransferase (231 aa).

It belongs to the R-transferase family. Bpt subfamily.

The protein resides in the cytoplasm. The catalysed reaction is N-terminal L-glutamyl-[protein] + L-leucyl-tRNA(Leu) = N-terminal L-leucyl-L-glutamyl-[protein] + tRNA(Leu) + H(+). It catalyses the reaction N-terminal L-aspartyl-[protein] + L-leucyl-tRNA(Leu) = N-terminal L-leucyl-L-aspartyl-[protein] + tRNA(Leu) + H(+). In terms of biological role, functions in the N-end rule pathway of protein degradation where it conjugates Leu from its aminoacyl-tRNA to the N-termini of proteins containing an N-terminal aspartate or glutamate. This is Aspartate/glutamate leucyltransferase from Pseudoalteromonas atlantica (strain T6c / ATCC BAA-1087).